A 423-amino-acid polypeptide reads, in one-letter code: Histidine--tRNA ligase (423 aa).

This sequence belongs to the class-II aminoacyl-tRNA synthetase family. In terms of assembly, homodimer.

Its subcellular location is the cytoplasm. It catalyses the reaction tRNA(His) + L-histidine + ATP = L-histidyl-tRNA(His) + AMP + diphosphate + H(+). In Haemophilus influenzae (strain PittEE), this protein is Histidine--tRNA ligase.